A 288-amino-acid polypeptide reads, in one-letter code: Pantothenate synthetase (288 aa).

35–42 (MGALHDGH) provides a ligand contact to ATP. The active-site Proton donor is His-42. A (R)-pantoate-binding site is contributed by Gln-66. Gln-66 contributes to the beta-alanine binding site. 152–155 (GEKD) lines the ATP pocket. Position 158 (Gln-158) interacts with (R)-pantoate. ATP is bound by residues Gly-181 and 189–192 (LSSR).

It belongs to the pantothenate synthetase family. As to quaternary structure, homodimer.

The protein localises to the cytoplasm. The enzyme catalyses (R)-pantoate + beta-alanine + ATP = (R)-pantothenate + AMP + diphosphate + H(+). It functions in the pathway cofactor biosynthesis; (R)-pantothenate biosynthesis; (R)-pantothenate from (R)-pantoate and beta-alanine: step 1/1. In terms of biological role, catalyzes the condensation of pantoate with beta-alanine in an ATP-dependent reaction via a pantoyl-adenylate intermediate. This is Pantothenate synthetase from Maricaulis maris (strain MCS10) (Caulobacter maris).